The following is a 197-amino-acid chain: Putative manganese efflux pump MntP (197 aa).

Transmembrane regions (helical) follow at residues 8-28 (VILL…GLGA), 43-63 (VYAA…GYLL), 66-86 (VLLG…LIVL), 123-143 (LAIA…LLAL), 146-166 (WLAC…GIYL), and 177-197 (KAEI…MLFS).

Belongs to the MntP (TC 9.B.29) family.

The protein localises to the cell inner membrane. Probably functions as a manganese efflux pump. This Psychrobacter arcticus (strain DSM 17307 / VKM B-2377 / 273-4) protein is Putative manganese efflux pump MntP.